The sequence spans 331 residues: Centriolar satellite-associated tubulin polyglutamylase complex regulator 1 (331 aa).

Residues 1–111 (MLSPERLALP…HCLLQLLCPD (111 aa)) form a required for interaction with PCM1 region. The required for interaction with TPGS1, LRRC49, and TTLL1 stretch occupies residues 1 to 225 (MLSPERLALP…SCPPPALVKE (225 aa)). Residues 112-331 (FPLELTQKAA…STEETDESET (220 aa)) form a required for interaction with TPGS2 region. The interval 288–331 (SPEASCLPSRTPPRVGSPWRPLHHSRKVDGESDGSTEETDESET) is disordered. A compositionally biased stretch (acidic residues) spans 318–331 (ESDGSTEETDESET). At Ser319 the chain carries Phosphoserine.

The protein belongs to the CSTPP1 family. As to quaternary structure, interacts with PCM1. Interacts with TTLL1, TPGS1, TPGS2 and LRRC49; the interactions link CSTPP1 to the complex TPGC. Binds to alpha-tubulin.

It is found in the cytoplasm. The protein resides in the cytoskeleton. It localises to the microtubule organizing center. Its subcellular location is the centrosome. The protein localises to the centriolar satellite. Its function is as follows. Regulator of the tubulin polyglutamylase complex (TPGC) that controls cytoskeletal organization, nuclear shape, and cilium disassembly by balancing microtubule and actin assembly. Regulates the assembly and stability of the TPGC and thereby modulates polyglutamylation of the microtubule, which antagonizes MAP4 binding. The protein is Centriolar satellite-associated tubulin polyglutamylase complex regulator 1 (CSTPP1) of Pongo abelii (Sumatran orangutan).